The primary structure comprises 568 residues: Involucrin (568 aa).

2 disordered regions span residues 23–499 (CSPA…EKEL) and 517–568 (RKKH…HEVQ). Positions 25–36 (PAQTQQEQTKQP) are enriched in low complexity. A compositionally biased stretch (basic and acidic residues) spans 49 to 77 (TQEKGFPKHEEKEANPVKDLPEQESEHHQ). Residues 78 to 88 (QPGPQKQQLQV) are compositionally biased toward low complexity. The span at 89-106 (KKPEQELQEQELHSEKQP) shows a compositional bias: basic and acidic residues. Low complexity-rich tracts occupy residues 107–121 (QEPQGLLCLGQQQQR), 133–154 (HQQPQQESQGQGLCLGQQQDVL), and 172–181 (PELPLGQQQK). Over residues 193–213 (KQQKLHLVERHQEPQEQELHH) the composition is skewed to basic and acidic residues. The segment covering 217-232 (QKQQQPQEQELQLVQH) has biased composition (low complexity). Composition is skewed to basic and acidic residues over residues 266–333 (ESHE…HQET) and 345–456 (KPHE…HLGK). Positions 457–467 (QQEQQIEYEGY) are enriched in low complexity. Residue Ser-472 is modified to Phosphoserine. Composition is skewed to basic and acidic residues over residues 478-499 (KQEKASRGQELDDSHLEQEKEL), 517-532 (RKKHKLENLTQKEKQI), and 551-568 (VKEDSLTTKKQQHSHEVQ).

The protein belongs to the involucrin family. Directly or indirectly cross-linked to cornifelin (CNFN). Substrate of transglutaminase. Specific glutamines or lysines are cross-linked to keratins, desmoplakin and to inter involucrin molecules. As to expression, keratinocytes of epidermis and other stratified squamous epithelia.

The protein resides in the cytoplasm. Its function is as follows. Part of the insoluble cornified cell envelope (CE) of stratified squamous epithelia. The polypeptide is Involucrin (Ivl) (Rattus norvegicus (Rat)).